The primary structure comprises 260 residues: Voltage-dependent calcium channel gamma-6 subunit (260 aa).

4 consecutive transmembrane segments (helical) span residues leucine 43–valine 63, valine 143–leucine 163, phenylalanine 169–leucine 189, and leucine 221–leucine 241.

It belongs to the PMP-22/EMP/MP20 family. CACNG subfamily. As to quaternary structure, interacts with CACNA1C. Identified in a complex with the L-type calcium channel subunits CACNA1C, CACNA2D1 and either CACNB1 or CACNB2. Detected in heart atrium and ventricle, aorta and skeletal muscle. Detected in heart left ventricle.

The protein localises to the cell membrane. Regulates the activity of L-type calcium channels that contain CACNA1C as pore-forming subunit. The chain is Voltage-dependent calcium channel gamma-6 subunit (Cacng6) from Rattus norvegicus (Rat).